An 85-amino-acid chain; its full sequence is MDPKKIARINELSKKKKTVGLTGEEKVEQAKLREEYIEGFRRSVRHHVEGIKLVDDEGNDVTPEKLRQVQREKGLHGRSLDDPNS.

The interval 58–85 is disordered; it reads GNDVTPEKLRQVQREKGLHGRSLDDPNS. Basic and acidic residues predominate over residues 62-85; that stretch reads TPEKLRQVQREKGLHGRSLDDPNS.

It belongs to the UPF0291 family.

The protein localises to the cytoplasm. The sequence is that of UPF0291 protein SAK_0343 from Streptococcus agalactiae serotype Ia (strain ATCC 27591 / A909 / CDC SS700).